Here is a 784-residue protein sequence, read N- to C-terminus: Protein-tyrosine-phosphatase MKP1 (784 aa).

Disordered stretches follow at residues 1–73 (MVGR…NSKA) and 94–118 (PKAG…TGER). Residues 22-34 (WRSASWSASRTAS) show a composition bias toward low complexity. Phosphothreonine occurs at positions 64 and 109. Positions 149–291 (ECSKVADHIY…LLQCQKRVHA (143 aa)) constitute a Tyrosine-protein phosphatase domain. Cys-235 functions as the Phosphocysteine intermediate in the catalytic mechanism. 235-241 (CCQGVSR) is a substrate binding site. The disordered stretch occupies residues 488 to 586 (HSSGSPSSTT…ASPSLAERRG (99 aa)). Low complexity-rich tracts occupy residues 489 to 510 (SSGS…FLSP) and 521 to 553 (SLKS…LSLL). Residues 554-577 (PSQTSPKESRGVNTFLQPSPNRKA) are compositionally biased toward polar residues. A phosphoserine mark is found at Ser-558 and Ser-572.

Interacts with MPK6. May interact with MPK3 and MPK4. In terms of processing, phosphorylated on threonine and serine residues by MPK6.

It localises to the cytoplasm. Its subcellular location is the cytosol. The enzyme catalyses O-phospho-L-tyrosyl-[protein] + H2O = L-tyrosyl-[protein] + phosphate. In terms of biological role, protein-tyrosine-phosphatase that acts as a negative regulator of MPK6 and MPK3 signaling by dephosphorylating and repressing MPK6 and MPK3. Modulates defense response by repressing salicylic acid (SA) production, camalexin biosynthesis and SNC1-mediated responses. Acts as a negative regulator of MPK6-mediated pathogen-associated molecular pattern (PAMP) responses, including MPK6 and MPK3 activation, accumulation of extracellular reactive oxygen species and inhibition of seedling growth. Involved in UV-B stress tolerance. May be involved in salt and genotoxic stress responses. This Arabidopsis thaliana (Mouse-ear cress) protein is Protein-tyrosine-phosphatase MKP1 (MKP1).